Reading from the N-terminus, the 36-residue chain is Photosystem I reaction center subunit VIII (36 aa).

The helical transmembrane segment at 7-29 threads the bilayer; it reads PSILVPLVGLVFPAITLASLFIY.

This sequence belongs to the PsaI family.

The protein resides in the plastid. The protein localises to the chloroplast thylakoid membrane. Its function is as follows. May help in the organization of the PsaL subunit. This chain is Photosystem I reaction center subunit VIII, found in Anthoceros angustus (Hornwort).